The following is an 89-amino-acid chain: Small ribosomal subunit protein uS15 (89 aa).

This sequence belongs to the universal ribosomal protein uS15 family. In terms of assembly, part of the 30S ribosomal subunit. Forms a bridge to the 50S subunit in the 70S ribosome, contacting the 23S rRNA.

In terms of biological role, one of the primary rRNA binding proteins, it binds directly to 16S rRNA where it helps nucleate assembly of the platform of the 30S subunit by binding and bridging several RNA helices of the 16S rRNA. Its function is as follows. Forms an intersubunit bridge (bridge B4) with the 23S rRNA of the 50S subunit in the ribosome. This is Small ribosomal subunit protein uS15 from Geobacillus sp. (strain WCH70).